The sequence spans 709 residues: Leucine-rich repeat-containing protein 4B (709 aa).

The N-terminal stretch at 1–38 is a signal peptide; that stretch reads MAQAHIQGSPCPLLPPGRMSWPQGALLLLWLFSPPLRA. An LRRNT domain is found at 50–88; that stretch reads GGGSPPATSCPAACSCSNQASRVICTRRELAEVPASIPV. LRR repeat units follow at residues 89–110, 113–134, 137–158, 161–182, 185–207, 210–231, 232–253, 256–277, and 280–301; these read NTRY…TFKH, HLEI…AFNG, SLNT…AFEY, KLRE…AFNR, SLRR…AFEG, NLRY…TALV, RLEE…SFQG, SLRK…AFDD, and SLEE…LFTP. The 53-residue stretch at 313-365 folds into the LRRCT domain; that stretch reads NPWHCNCDVLWLSWWLKETVPSNTTCCARCHAPAGLKGRYIGELDQSHFTCYA. In terms of domain architecture, Ig-like C2-type spans 366-454; it reads PVIVEPPTDL…GNTTASATLN (89 aa). 5 N-linked (GlcNAc...) asparagine glycosylation sites follow: asparagine 376, asparagine 402, asparagine 424, asparagine 427, and asparagine 446. The cysteines at positions 387 and 438 are disulfide-linked. Positions 496–552 are disordered; that stretch reads TQPGEEAQQPRGTEKEPPGPTTDGAWGGGRPDAAAPASASTTAPAPRSSRPTEKAFT. Residues 528 to 544 show a composition bias toward low complexity; sequence AAAPASASTTAPAPRSS. Residues 575–595 form a helical membrane-spanning segment; sequence IIIGCFVAITFMAAVMLVAFY. Residue serine 689 is modified to Phosphoserine.

In terms of assembly, interacts with PTPRF. Interacts with DLG4. Post-translationally, N-glycosylated. O-glycosylated; contains sialic acid. As to expression, mainly expressed in the brain. Widespread distribution in various brain regions (at protein level). Detected both embryonically and postnatally with stronger expression in postnatal stages.

The protein localises to the membrane. Its subcellular location is the presynaptic cell membrane. Synaptic adhesion protein. Regulates the formation of excitatory synapses. The trans-synaptic adhesion between LRRC4B and PTPRF regulates the formation of excitatory synapses in a bidirectional manner. The polypeptide is Leucine-rich repeat-containing protein 4B (Lrrc4b) (Rattus norvegicus (Rat)).